We begin with the raw amino-acid sequence, 447 residues long: Signal recognition particle 54 kDa protein (447 aa).

GTP-binding positions include 105 to 112 (GVQGSGKT), 187 to 191 (DTAGR), and 247 to 250 (TKMD).

This sequence belongs to the GTP-binding SRP family. SRP54 subfamily. Part of the signal recognition particle protein translocation system, which is composed of SRP and FtsY. Archaeal SRP consists of a 7S RNA molecule of 300 nucleotides and two protein subunits: SRP54 and SRP19.

The protein localises to the cytoplasm. The enzyme catalyses GTP + H2O = GDP + phosphate + H(+). Functionally, involved in targeting and insertion of nascent membrane proteins into the cytoplasmic membrane. Binds to the hydrophobic signal sequence of the ribosome-nascent chain (RNC) as it emerges from the ribosomes. The SRP-RNC complex is then targeted to the cytoplasmic membrane where it interacts with the SRP receptor FtsY. This Hyperthermus butylicus (strain DSM 5456 / JCM 9403 / PLM1-5) protein is Signal recognition particle 54 kDa protein.